Consider the following 117-residue polypeptide: Large ribosomal subunit protein uL18 (117 aa).

This sequence belongs to the universal ribosomal protein uL18 family. Part of the 50S ribosomal subunit; part of the 5S rRNA/L5/L18/L25 subcomplex. Contacts the 5S and 23S rRNAs.

This is one of the proteins that bind and probably mediate the attachment of the 5S RNA into the large ribosomal subunit, where it forms part of the central protuberance. The chain is Large ribosomal subunit protein uL18 from Laribacter hongkongensis (strain HLHK9).